The following is a 294-amino-acid chain: Ethylene-inducing xylanase 3 (294 aa).

An N-terminal signal peptide occupies residues 1–19 (MVCFSSLFVAASAIAGVFA). Residues 31–226 (QSTPSSQGTH…SSGSARINVA (196 aa)) form the GH11 domain. Glutamate 122 functions as the Nucleophile in the catalytic mechanism. Catalysis depends on glutamate 213, which acts as the Proton donor. The CBM1 domain occupies 259 to 294 (SCAARWGQCGGSGWNGATCCSAGTCQAQNQWYSQCL).

Belongs to the glycosyl hydrolase 11 (cellulase G) family.

It catalyses the reaction Endohydrolysis of (1-&gt;4)-beta-D-xylosidic linkages in xylans.. It participates in glycan degradation; xylan degradation. Endo-1,4-beta-xylanase involved in the hydrolysis of xylan, a major structural heterogeneous polysaccharide found in plant biomass representing the second most abundant polysaccharide in the biosphere, after cellulose. Exhibits immunity-inducing activity in Nicotiana benthamiana. Can induce strong oxidative burst, activate the expression of defense-related genes, and increase resistance against oomycete and fungal pathogens in N.benthamiana. The sequence is that of Ethylene-inducing xylanase 3 from Verticillium dahliae (strain VdLs.17 / ATCC MYA-4575 / FGSC 10137) (Verticillium wilt).